The primary structure comprises 300 residues: Ribosomal RNA small subunit methyltransferase H (300 aa).

S-adenosyl-L-methionine-binding positions include 46 to 48 (GGH), aspartate 65, phenylalanine 92, aspartate 107, and glutamine 114.

This sequence belongs to the methyltransferase superfamily. RsmH family.

It is found in the cytoplasm. It carries out the reaction cytidine(1402) in 16S rRNA + S-adenosyl-L-methionine = N(4)-methylcytidine(1402) in 16S rRNA + S-adenosyl-L-homocysteine + H(+). Functionally, specifically methylates the N4 position of cytidine in position 1402 (C1402) of 16S rRNA. This Prochlorococcus marinus subsp. pastoris (strain CCMP1986 / NIES-2087 / MED4) protein is Ribosomal RNA small subunit methyltransferase H.